The chain runs to 1072 residues: Rho family-interacting cell polarization regulator 2 (1072 aa).

Residues 83-112 are a coiled coil; it reads NGLDEYLEVHQTELDKLTAQLKDMRRNSRL. The interval 173-470 is necessary for interaction with NCAM and myoblast protrusion formation; that stretch reads RESLTEINRS…ATTATQHRAR (298 aa). Disordered regions lie at residues 439 to 465 and 683 to 718; these read DRVPPANSAEPSSAHVTSSPDIATTAT and EVEKNSYRTEHPEARGHLQRSLTEDTGVGTSVAGSP. The segment covering 447–460 has biased composition (polar residues); the sequence is AEPSSAHVTSSPDI. Positions 683–698 are enriched in basic and acidic residues; it reads EVEKNSYRTEHPEARG.

The protein belongs to the RIPOR family. In terms of assembly, homooligomer; homooligomerization is regulated by RHOC and leads to the formation of concatemers through the association of N- and C-termini. Interacts with NCAM; this interaction is necessary for myoblast protrusion formation. In terms of tissue distribution, expressed in myoblast and myotubes (at protein level). Expressed in brain, eyes and skeletal muscle.

The protein resides in the cytoplasm. Its subcellular location is the cytoskeleton. It localises to the cell projection. It is found in the filopodium. The protein localises to the apical cell membrane. The protein resides in the stereocilium. Its subcellular location is the stereocilium membrane. In terms of biological role, acts as an inhibitor of the small GTPase RHOA and plays several roles in the regulation of myoblast and hair cell differentiation, lymphocyte T proliferation and neutrophil polarization. Plays a role in fetal mononuclear myoblast differentiation by promoting filopodia and myotube formation. Maintains naive T lymphocytes in a quiescent state and prevents chemokine-induced T lymphocyte responses, such as cell adhesion, polarization and migration. Involved also in the regulation of neutrophil polarization, chemotaxis and adhesion. Required for normal development of inner and outer hair cell stereocilia within the cochlea of the inner ear. Plays a role for maintaining the structural organization of the basal domain of stereocilia. Involved in mechanosensory hair cell function. Required for normal hearing. The protein is Rho family-interacting cell polarization regulator 2 of Coturnix japonica (Japanese quail).